The sequence spans 497 residues: MEMMILISLCLTTFLTILLFFKSLLKRPNSNLPPSPWRLPVIGNLHQLSLHPHRALSSLSARHGPLMLLRFGRVPVLIVSSADVAHDVMKTHDLKFANRPITKSAHKISNGGRDLVFAPYGEYWRNVKSLCTIHLLSNKMVQSSEKRREEEITLLMETLEEASLSSSSVNLSKLITNMVSDIMGKVVLGKKYSGEEGTIDVKTITKSFLDAVGLSPVGEYIPSLAWIGKITGSDGKLEKITKQFGDFIEKVLQEHEDTTADKETPDFVDMLLTIQRDETAQCQLDKSDLKVIIFEMFLGSTTTTSAVIEWAMTRLMRNPECLKKLQDEIRSVSKMNSYVSGKEVENMNYLKAVIKEVLRLHPPLPLLVPRLLSEDVKLKGYDITAGTQVIINAWAIQRDTATWGSDAQEFRPERHFDSTWDFVGRNFKYIPFGAGRRLCPGIGLGSVMASVTLANLVKRFDWRVEDGPSGYDKPDLVEGAGIDVCRKFPLVVFPSSA.

Residues 1–21 traverse the membrane as a helical segment; the sequence is MEMMILISLCLTTFLTILLFF. Residue C439 coordinates heme.

Belongs to the cytochrome P450 family. It depends on heme as a cofactor.

The protein resides in the membrane. Its function is as follows. Possesses triterpene oxidizing activity. Catalyzes the C23 hydroxylation of marneral to form 23-hydroxymarneral. Catalyzes the C23 hydroxylation of marnerol to form 23-hydroxymarnerol. This chain is Cytochrome P450 71A16 (CYP71A16), found in Arabidopsis thaliana (Mouse-ear cress).